We begin with the raw amino-acid sequence, 915 residues long: Probable serine/threonine-protein kinase dyrk2 (915 aa).

Low complexity-rich tracts occupy residues 51–79 (TSNTTPSNNNNNNNTTTTITTTTTTPTIS), 108–119 (SSSKSSSNSSSI), 170–185 (SSSSTSSSSSSSSTTS), and 196–218 (SSNSGSSSSGGNNNNSDDNSGSS). 3 disordered regions span residues 51-119 (TSNT…SSSI), 132-334 (FSSS…SKSS), and 349-533 (AIKS…PTKS). Positions 234–260 (PSHTISDSPRSSTMKSRSVSISNGSLF) are enriched in polar residues. 6 stretches are compositionally biased toward low complexity: residues 261 to 287 (SPTNTSVNNSNNNTSSNIKTPTKSSIS), 300 to 333 (SSSTTKTPTATTTTTTTTTSSSSSTSTNTTPSKS), 352 to 364 (SRSLSVSASLARV), 379 to 391 (SSSSSSSSSSFSS), 399 to 425 (SSSKTPTPTSSNTTVQPSTTSLSASKI), and 433 to 533 (SLSS…PTKS). The region spanning 605–902 (FEIVSILGQG…AEQGLKHDWI (298 aa)) is the Protein kinase domain. Residues 611-619 (LGQGSFCQV) and Lys-634 each bind ATP. The active-site Proton acceptor is Asp-731.

Belongs to the protein kinase superfamily. CMGC Ser/Thr protein kinase family. MNB/DYRK subfamily.

It catalyses the reaction L-seryl-[protein] + ATP = O-phospho-L-seryl-[protein] + ADP + H(+). The catalysed reaction is L-threonyl-[protein] + ATP = O-phospho-L-threonyl-[protein] + ADP + H(+). It carries out the reaction L-tyrosyl-[protein] + ATP = O-phospho-L-tyrosyl-[protein] + ADP + H(+). In Dictyostelium discoideum (Social amoeba), this protein is Probable serine/threonine-protein kinase dyrk2 (dyrk2).